Here is a 31-residue protein sequence, read N- to C-terminus: Cytochrome b6-f complex subunit 6 (31 aa).

The chain crosses the membrane as a helical span at residues 4 to 24; the sequence is LLSYFAFLMLALTFTLALFVG.

It belongs to the PetL family. The 4 large subunits of the cytochrome b6-f complex are cytochrome b6, subunit IV (17 kDa polypeptide, PetD), cytochrome f and the Rieske protein, while the 4 small subunits are PetG, PetL, PetM and PetN. The complex functions as a dimer.

The protein localises to the plastid. The protein resides in the chloroplast thylakoid membrane. Component of the cytochrome b6-f complex, which mediates electron transfer between photosystem II (PSII) and photosystem I (PSI), cyclic electron flow around PSI, and state transitions. PetL is important for photoautotrophic growth as well as for electron transfer efficiency and stability of the cytochrome b6-f complex. This is Cytochrome b6-f complex subunit 6 from Adiantum capillus-veneris (Maidenhair fern).